A 356-amino-acid polypeptide reads, in one-letter code: S-adenosylmethionine:tRNA ribosyltransferase-isomerase (356 aa).

Belongs to the QueA family. Monomer.

It is found in the cytoplasm. It catalyses the reaction 7-aminomethyl-7-carbaguanosine(34) in tRNA + S-adenosyl-L-methionine = epoxyqueuosine(34) in tRNA + adenine + L-methionine + 2 H(+). The protein operates within tRNA modification; tRNA-queuosine biosynthesis. Transfers and isomerizes the ribose moiety from AdoMet to the 7-aminomethyl group of 7-deazaguanine (preQ1-tRNA) to give epoxyqueuosine (oQ-tRNA). The polypeptide is S-adenosylmethionine:tRNA ribosyltransferase-isomerase (Shigella boydii serotype 4 (strain Sb227)).